The primary structure comprises 220 residues: Ribonuclease HII (220 aa).

Residues 16–216 (PVFAGIDEAG…VRPNPAAEEQ (201 aa)) form the RNase H type-2 domain. A divalent metal cation contacts are provided by Asp22, Glu23, and Asp114.

It belongs to the RNase HII family. Requires Mn(2+) as cofactor. It depends on Mg(2+) as a cofactor.

Its subcellular location is the cytoplasm. The enzyme catalyses Endonucleolytic cleavage to 5'-phosphomonoester.. Endonuclease that specifically degrades the RNA of RNA-DNA hybrids. This is Ribonuclease HII from Nitratidesulfovibrio vulgaris (strain ATCC 29579 / DSM 644 / CCUG 34227 / NCIMB 8303 / VKM B-1760 / Hildenborough) (Desulfovibrio vulgaris).